The primary structure comprises 232 residues: Peptidoglycan-recognition protein LB (232 aa).

Positions 1 to 15 (MTALGLVLLSMMGYS) are cleaved as a signal peptide. The 127-residue stretch at 53–179 (APYVIIHHSY…RQVRDTECPG (127 aa)) folds into the N-acetylmuramoyl-L-alanine amidase domain. His-59 is a binding site for Zn(2+). Cys-67 and Cys-73 are joined by a disulfide. The Zn(2+) site is built by His-169 and Cys-177. Asn-196 carries N-linked (GlcNAc...) asparagine glycosylation. The tract at residues 213 to 232 (HPQAAAPQKPHQSPPAAPKV) is disordered.

Belongs to the N-acetylmuramoyl-L-alanine amidase 2 family. In terms of assembly, monomer. Zn(2+) is required as a cofactor. In terms of tissue distribution, widely expressed.

The protein resides in the secreted. It catalyses the reaction Hydrolyzes the link between N-acetylmuramoyl residues and L-amino acid residues in certain cell-wall glycopeptides.. In terms of biological role, N-acetylmuramyl-L-alanine amidase involved in innate immunity by degrading bacterial peptidoglycans (PGN). Probably plays a scavenger role by digesting biologically active PGN into biologically inactive fragments. Has no direct bacteriolytic activity. This Drosophila melanogaster (Fruit fly) protein is Peptidoglycan-recognition protein LB (PGRP-LB).